We begin with the raw amino-acid sequence, 552 residues long: Phosphoglucomutase (552 aa).

Ser135 serves as the catalytic Phosphoserine intermediate. Residues Ser135, Asp289, Asp291, and Asp293 each coordinate Mg(2+).

The protein belongs to the phosphohexose mutase family. The cofactor is Mg(2+).

The catalysed reaction is alpha-D-glucose 1-phosphate = alpha-D-glucose 6-phosphate. It participates in glycolipid metabolism; diglucosyl-diacylglycerol biosynthesis. In terms of biological role, catalyzes the interconversion between glucose-6-phosphate and alpha-glucose-1-phosphate. This is the first step in the biosynthesis of diglucosyl-diacylglycerol (Glc2-DAG), i.e. a glycolipid found in the membrane, which is also used as a membrane anchor for lipoteichoic acid (LTA). This chain is Phosphoglucomutase (pgcA), found in Staphylococcus saprophyticus subsp. saprophyticus (strain ATCC 15305 / DSM 20229 / NCIMB 8711 / NCTC 7292 / S-41).